The chain runs to 938 residues: Phosphoenolpyruvate carboxylase (938 aa).

Active-site residues include His151 and Lys591.

The protein belongs to the PEPCase type 1 family. Mg(2+) serves as cofactor.

It catalyses the reaction oxaloacetate + phosphate = phosphoenolpyruvate + hydrogencarbonate. Forms oxaloacetate, a four-carbon dicarboxylic acid source for the tricarboxylic acid cycle. In Roseiflexus castenholzii (strain DSM 13941 / HLO8), this protein is Phosphoenolpyruvate carboxylase.